Here is a 316-residue protein sequence, read N- to C-terminus: Phospho-N-acetylmuramoyl-pentapeptide-transferase (316 aa).

Helical transmembrane passes span 5 to 25, 49 to 69, 76 to 96, 116 to 136, 141 to 161, 172 to 192, 195 to 212, 221 to 241, 244 to 264, and 296 to 316; these read IILA…LFIP, GTPT…TLIF, LAIL…DDFL, FLLA…EVIF, TTID…VGTV, GLAA…ALFL, ITYG…LGFL, IFMG…AAVL, LPLI…SVII, and VVYA…YSLS.

This sequence belongs to the glycosyltransferase 4 family. MraY subfamily. It depends on Mg(2+) as a cofactor.

The protein resides in the cell membrane. It catalyses the reaction UDP-N-acetyl-alpha-D-muramoyl-L-alanyl-gamma-D-glutamyl-meso-2,6-diaminopimeloyl-D-alanyl-D-alanine + di-trans,octa-cis-undecaprenyl phosphate = di-trans,octa-cis-undecaprenyl diphospho-N-acetyl-alpha-D-muramoyl-L-alanyl-D-glutamyl-meso-2,6-diaminopimeloyl-D-alanyl-D-alanine + UMP. The protein operates within cell wall biogenesis; peptidoglycan biosynthesis. Catalyzes the initial step of the lipid cycle reactions in the biosynthesis of the cell wall peptidoglycan: transfers peptidoglycan precursor phospho-MurNAc-pentapeptide from UDP-MurNAc-pentapeptide onto the lipid carrier undecaprenyl phosphate, yielding undecaprenyl-pyrophosphoryl-MurNAc-pentapeptide, known as lipid I. This is Phospho-N-acetylmuramoyl-pentapeptide-transferase from Thermoanaerobacter pseudethanolicus (strain ATCC 33223 / 39E) (Clostridium thermohydrosulfuricum).